A 616-amino-acid polypeptide reads, in one-letter code: Dihydroxy-acid dehydratase (616 aa).

Asp81 contributes to the Mg(2+) binding site. Position 122 (Cys122) interacts with [2Fe-2S] cluster. Asp123 and Lys124 together coordinate Mg(2+). Lys124 bears the N6-carboxylysine mark. Cys195 is a [2Fe-2S] cluster binding site. Residue Glu491 coordinates Mg(2+). Ser517 functions as the Proton acceptor in the catalytic mechanism.

It belongs to the IlvD/Edd family. As to quaternary structure, homodimer. It depends on [2Fe-2S] cluster as a cofactor. Mg(2+) serves as cofactor.

The catalysed reaction is (2R)-2,3-dihydroxy-3-methylbutanoate = 3-methyl-2-oxobutanoate + H2O. It catalyses the reaction (2R,3R)-2,3-dihydroxy-3-methylpentanoate = (S)-3-methyl-2-oxopentanoate + H2O. It participates in amino-acid biosynthesis; L-isoleucine biosynthesis; L-isoleucine from 2-oxobutanoate: step 3/4. The protein operates within amino-acid biosynthesis; L-valine biosynthesis; L-valine from pyruvate: step 3/4. Functionally, functions in the biosynthesis of branched-chain amino acids. Catalyzes the dehydration of (2R,3R)-2,3-dihydroxy-3-methylpentanoate (2,3-dihydroxy-3-methylvalerate) into 2-oxo-3-methylpentanoate (2-oxo-3-methylvalerate) and of (2R)-2,3-dihydroxy-3-methylbutanoate (2,3-dihydroxyisovalerate) into 2-oxo-3-methylbutanoate (2-oxoisovalerate), the penultimate precursor to L-isoleucine and L-valine, respectively. The chain is Dihydroxy-acid dehydratase from Escherichia coli (strain SMS-3-5 / SECEC).